The primary structure comprises 472 residues: Tubulin gamma chain (472 aa).

142–148 (AGGTGSG) serves as a coordination point for GTP.

This sequence belongs to the tubulin family.

It is found in the cytoplasm. Its subcellular location is the cytoskeleton. The protein resides in the microtubule organizing center. Its function is as follows. Tubulin is the major constituent of microtubules. The gamma chain is found at microtubule organizing centers (MTOC) such as the spindle poles, suggesting that it is involved in the minus-end nucleation of microtubule assembly. This chain is Tubulin gamma chain (TUBG), found in Anemia phyllitidis (Fern).